We begin with the raw amino-acid sequence, 601 residues long: Elongation factor 4 (601 aa).

One can recognise a tr-type G domain in the interval 6–188 (QFIRNFSIIA…AITKEIPAPK (183 aa)). GTP contacts are provided by residues 18-23 (DHGKST) and 135-138 (NKID).

The protein belongs to the TRAFAC class translation factor GTPase superfamily. Classic translation factor GTPase family. LepA subfamily.

It is found in the cell inner membrane. It catalyses the reaction GTP + H2O = GDP + phosphate + H(+). Its function is as follows. Required for accurate and efficient protein synthesis under certain stress conditions. May act as a fidelity factor of the translation reaction, by catalyzing a one-codon backward translocation of tRNAs on improperly translocated ribosomes. Back-translocation proceeds from a post-translocation (POST) complex to a pre-translocation (PRE) complex, thus giving elongation factor G a second chance to translocate the tRNAs correctly. Binds to ribosomes in a GTP-dependent manner. The chain is Elongation factor 4 from Leptospira borgpetersenii serovar Hardjo-bovis (strain JB197).